The sequence spans 343 residues: Ribosomal RNA small subunit methyltransferase C (343 aa).

Belongs to the methyltransferase superfamily. RsmC family. In terms of assembly, monomer.

The protein localises to the cytoplasm. The enzyme catalyses guanosine(1207) in 16S rRNA + S-adenosyl-L-methionine = N(2)-methylguanosine(1207) in 16S rRNA + S-adenosyl-L-homocysteine + H(+). In terms of biological role, specifically methylates the guanine in position 1207 of 16S rRNA in the 30S particle. This chain is Ribosomal RNA small subunit methyltransferase C, found in Escherichia coli O1:K1 / APEC.